Here is a 101-residue protein sequence, read N- to C-terminus: Enhancer of yellow 2 transcription factor (101 aa).

The protein belongs to the ENY2 family. In terms of assembly, component of the nuclear pore complex (NPC)-associated AMEX complex (anchoring and mRNA export complex), composed of at least e(y)2 and xmas-2. Component of the SAGA transcription coactivator-HAT complexes, at least composed of Ada2b, e(y)2, Pcaf/Gcn5, Taf10 and Nipped-A/Trrap. Within the SAGA complex, e(y)2, Sgf11, and not/nonstop form an additional subcomplex of SAGA called the DUB module (deubiquitination module). Component of the THO complex, composed of at least e(y)2, HPR1, THO2, THOC5, THOC6 and THOC7. Interacts with e(y)1. Interacts with su(Hw) (via zinc fingers). Interacts with xmas-2; required for localization to the nuclear periphery. Interacts with the nuclear pore complex (NPC).

The protein resides in the nucleus. The protein localises to the nucleoplasm. It localises to the cytoplasm. Functionally, involved in mRNA export coupled transcription activation by association with both the AMEX and the SAGA complexes. The SAGA complex is a multiprotein complex that activates transcription by remodeling chromatin and mediating histone acetylation and deubiquitination. Within the SAGA complex, participates in a subcomplex that specifically deubiquitinates histone H2B. The SAGA complex is recruited to specific gene promoters by activators, where it is required for transcription. Required for nuclear receptor-mediated transactivation. Involved in transcription elongation by recruiting the THO complex onto nascent mRNA. The AMEX complex functions in docking export-competent ribonucleoprotein particles (mRNPs) to the nuclear entrance of the nuclear pore complex (nuclear basket). AMEX participates in mRNA export and accurate chromatin positioning in the nucleus by tethering genes to the nuclear periphery. In Drosophila erecta (Fruit fly), this protein is Enhancer of yellow 2 transcription factor.